Consider the following 465-residue polypeptide: tRNA-2-methylthio-N(6)-dimethylallyladenosine synthase (465 aa).

Residues 26-141 (MRAHIITYGC…LPEALKANER (116 aa)) form the MTTase N-terminal domain. Residues Cys35, Cys71, Cys104, Cys173, Cys177, and Cys180 each contribute to the [4Fe-4S] cluster site. A Radical SAM core domain is found at 159–388 (PKGALSAHVT…IEKQKEWSYR (230 aa)). The TRAM domain occupies 391 to 453 (LEWVGKTVEV…PHLLFGEVVG (63 aa)).

The protein belongs to the methylthiotransferase family. MiaB subfamily. In terms of assembly, monomer. [4Fe-4S] cluster is required as a cofactor.

The protein localises to the cytoplasm. The enzyme catalyses N(6)-dimethylallyladenosine(37) in tRNA + (sulfur carrier)-SH + AH2 + 2 S-adenosyl-L-methionine = 2-methylsulfanyl-N(6)-dimethylallyladenosine(37) in tRNA + (sulfur carrier)-H + 5'-deoxyadenosine + L-methionine + A + S-adenosyl-L-homocysteine + 2 H(+). Its function is as follows. Catalyzes the methylthiolation of N6-(dimethylallyl)adenosine (i(6)A), leading to the formation of 2-methylthio-N6-(dimethylallyl)adenosine (ms(2)i(6)A) at position 37 in tRNAs that read codons beginning with uridine. In Thermus thermophilus (strain ATCC 27634 / DSM 579 / HB8), this protein is tRNA-2-methylthio-N(6)-dimethylallyladenosine synthase.